A 609-amino-acid polypeptide reads, in one-letter code: Replication protein A 70 kDa DNA-binding subunit (609 aa).

Residues 112–164 (IGNPHPYNDGQGPPQPAAPAPASAPPPSKPQNISAPPPPSMNRGASKLFGGGS) are disordered. The segment covering 124–151 (PPQPAAPAPASAPPPSKPQNISAPPPPS) has biased composition (pro residues). The segment at residues 189–273 (WTVRARVTNK…VKNDYEMTFN (85 aa)) is a DNA-binding region (OB). The segment at 472–494 (CPSQDCNKKVIDQQNGLFRCEKC) adopts a C4-type zinc-finger fold.

This sequence belongs to the replication factor A protein 1 family. Component of the heterotrimeric canonical replication protein A complex (RPA). Interacts with rpain-a.

It localises to the nucleus. The protein resides in the PML body. Functionally, as part of the heterotrimeric replication protein A complex (RPA/RP-A), binds and stabilizes single-stranded DNA intermediates, that form during DNA replication or upon DNA stress. It prevents their reannealing and in parallel, recruits and activates different proteins and complexes involved in DNA metabolism. Thereby, it plays an essential role both in DNA replication and the cellular response to DNA damage. This is Replication protein A 70 kDa DNA-binding subunit (rpa1) from Xenopus tropicalis (Western clawed frog).